The primary structure comprises 221 residues: Ribosome maturation factor RimM (221 aa).

Residues 1-23 (MTERKQGAAAPRPLNRPQGESPK) form a disordered region. The region spanning 144–221 (ENEFYWVDLI…RIVVDWGLDY (78 aa)) is the PRC barrel domain.

The protein belongs to the RimM family. Binds ribosomal protein uS19.

It localises to the cytoplasm. An accessory protein needed during the final step in the assembly of 30S ribosomal subunit, possibly for assembly of the head region. Essential for efficient processing of 16S rRNA. May be needed both before and after RbfA during the maturation of 16S rRNA. It has affinity for free ribosomal 30S subunits but not for 70S ribosomes. The sequence is that of Ribosome maturation factor RimM from Cupriavidus pinatubonensis (strain JMP 134 / LMG 1197) (Cupriavidus necator (strain JMP 134)).